A 393-amino-acid chain; its full sequence is Elongation factor Tu (393 aa).

The tr-type G domain occupies 10–203; sequence KPHVNIGTIG…AVDSYIPQPV (194 aa). Residues 19–26 form a G1 region; sequence GHVDHGKT. 19–26 provides a ligand contact to GTP; it reads GHVDHGKT. Mg(2+) is bound at residue Thr26. Positions 60–64 are G2; sequence GITIS. The tract at residues 81-84 is G3; the sequence is DCPG. Residues 81–85 and 136–139 each bind GTP; these read DCPGH and NKVD. The tract at residues 136–139 is G4; sequence NKVD. The G5 stretch occupies residues 173-175; that stretch reads SAL.

It belongs to the TRAFAC class translation factor GTPase superfamily. Classic translation factor GTPase family. EF-Tu/EF-1A subfamily. As to quaternary structure, monomer.

Its subcellular location is the cytoplasm. The catalysed reaction is GTP + H2O = GDP + phosphate + H(+). Functionally, GTP hydrolase that promotes the GTP-dependent binding of aminoacyl-tRNA to the A-site of ribosomes during protein biosynthesis. This Chlorobaculum tepidum (strain ATCC 49652 / DSM 12025 / NBRC 103806 / TLS) (Chlorobium tepidum) protein is Elongation factor Tu.